We begin with the raw amino-acid sequence, 212 residues long: MKKNTLSAILMTLFLFISCNNSGKGGDSASTNPADESAKGPNLTEISKKITDSNAFVLAVKEVETLVLSIDELAKKAIGQKIDNNNGLAALNNQNGSLLAGAYAISTLITEKLSKLKNLEELKTEIAKAKKCSEEFTNKLKSGHADLGKQDATDDHAKAAILKTHATTDKGAKEFKDLFESVEGLLKAAQVALTNSVKELTSPVVAESPKKP.

An N-terminal signal peptide occupies residues 1–18 (MKKNTLSAILMTLFLFIS). The N-palmitoyl cysteine moiety is linked to residue cysteine 19. Cysteine 19 carries the S-diacylglycerol cysteine lipid modification.

Belongs to the OspC lipoprotein family. Homodimer. Interacts with tick Ixodes ricinus salivary protein Iric-1. Binds human (host) plasminogen. In terms of processing, the N-terminus is blocked.

The protein resides in the cell outer membrane. The protein localises to the cell surface. Major immunodominant protein in mammalian hosts. Required for initial stages of mammalian infection. Inhibits macrophage-mediated phagocytosis of the bacteria. Binds human plasminogen; this probably confers an extracellular protease activity on the bacteria that allows it to traverse tissue. Unlike closely related strain B31, its interaction with Ixodes ricinus salivary protein Iric-1 does not protect against antibody-mediated destruction in vitro. This is Outer surface protein C from Borreliella afzelii (strain PKo) (Borrelia afzelii).